Reading from the N-terminus, the 218-residue chain is Protein Syd (218 aa).

It belongs to the Syd family.

It localises to the cell inner membrane. Its function is as follows. Interacts with the SecY protein in vivo. May bind preferentially to an uncomplexed state of SecY, thus functioning either as a chelating agent for excess SecY in the cell or as a regulatory factor that negatively controls the translocase function. The sequence is that of Protein Syd from Shewanella denitrificans (strain OS217 / ATCC BAA-1090 / DSM 15013).